The primary structure comprises 88 residues: Small ribosomal subunit protein uS17 (88 aa).

Belongs to the universal ribosomal protein uS17 family. In terms of assembly, part of the 30S ribosomal subunit.

In terms of biological role, one of the primary rRNA binding proteins, it binds specifically to the 5'-end of 16S ribosomal RNA. The polypeptide is Small ribosomal subunit protein uS17 (Prochlorococcus marinus (strain MIT 9515)).